Consider the following 250-residue polypeptide: Kallikrein-14 (250 aa).

The N-terminal stretch at methionine 1–serine 18 is a signal peptide. Residues glutamine 19–lysine 23 constitute a propeptide, activation peptide. The 225-residue stretch at isoleucine 24–glutamine 248 folds into the Peptidase S1 domain. Cysteine 51 and cysteine 67 are disulfide-bonded. Catalysis depends on charge relay system residues histidine 66 and aspartate 110. Intrachain disulfides connect cysteine 142–cysteine 209, cysteine 174–cysteine 188, and cysteine 199–cysteine 224. Serine 203 functions as the Charge relay system in the catalytic mechanism.

This sequence belongs to the peptidase S1 family. Kallikrein subfamily. In terms of processing, proteolytic cleavage of the activation peptide produces the active enzyme.

The protein localises to the secreted. It is found in the extracellular space. Its activity is regulated as follows. Inhibited by SERPINA1, SERPINC1, SERPINE1, SERPINF2, aprotinin, soybean, trypsin inhibitor and leupeptin. Inhibited by serine protease inhibitor SPINK5. Has an autoproteolytic activity which may have a regulatory effect. Activated by citrate and inhibited by zinc and to a lower extent by manganese. Functionally, serine-type endopeptidase with a dual trypsin-like and chymotrypsin-like substrate specificity. May activate/inactivate the proteinase-activated receptors F2R, F2RL1 and F2RL3 and other kallikreins including KLK1, KLK3, KLK5 and KLK11. May function in seminal clot liquefaction through direct cleavage of the semenogelin SEMG1 and SEMG2 and activation of KLK3. May function through desmoglein DSG1 cleavage in epidermal desquamation a process by which the most superficial corneocytes are shed from the skin surface. May be involved in several aspects of tumor progression including growth, invasion and angiogenesis. In Mus musculus (Mouse), this protein is Kallikrein-14 (Klk14).